The chain runs to 180 residues: Kappa-casein (180 aa).

A signal peptide spans 1 to 21 (MMKHFLLVVNILAVTLPFLAA). 4 O-linked (GalNAc...) threonine glycosylation sites follow: T132, T142, T147, and T153. S160 carries the phosphoserine; alternate modification. O-linked (GalNAc...) serine; alternate glycosylation occurs at S160.

The protein belongs to the kappa-casein family. Mammary gland specific. Secreted in milk.

It localises to the secreted. Functionally, kappa-casein stabilizes micelle formation, preventing casein precipitation in milk. This is Kappa-casein (CSN3) from Oryctolagus cuniculus (Rabbit).